A 244-amino-acid chain; its full sequence is Carboxy-S-adenosyl-L-methionine synthase (244 aa).

Residues Y38, 63–65 (GCS), 88–89 (DN), 116–117 (DI), N131, and R198 each bind S-adenosyl-L-methionine.

This sequence belongs to the class I-like SAM-binding methyltransferase superfamily. Cx-SAM synthase family. As to quaternary structure, homodimer.

The catalysed reaction is prephenate + S-adenosyl-L-methionine = carboxy-S-adenosyl-L-methionine + 3-phenylpyruvate + H2O. Its function is as follows. Catalyzes the conversion of S-adenosyl-L-methionine (SAM) to carboxy-S-adenosyl-L-methionine (Cx-SAM). In Haemophilus ducreyi (strain 35000HP / ATCC 700724), this protein is Carboxy-S-adenosyl-L-methionine synthase.